Reading from the N-terminus, the 238-residue chain is Ribonuclease PH (238 aa).

Residues arginine 86 and 124–126 (GTR) each bind phosphate.

Belongs to the RNase PH family. Homohexameric ring arranged as a trimer of dimers.

The enzyme catalyses tRNA(n+1) + phosphate = tRNA(n) + a ribonucleoside 5'-diphosphate. Functionally, phosphorolytic 3'-5' exoribonuclease that plays an important role in tRNA 3'-end maturation. Removes nucleotide residues following the 3'-CCA terminus of tRNAs; can also add nucleotides to the ends of RNA molecules by using nucleoside diphosphates as substrates, but this may not be physiologically important. Probably plays a role in initiation of 16S rRNA degradation (leading to ribosome degradation) during starvation. The protein is Ribonuclease PH of Salmonella agona (strain SL483).